A 126-amino-acid chain; its full sequence is Aspartate 1-decarboxylase (126 aa).

The active-site Schiff-base intermediate with substrate; via pyruvic acid is serine 25. A Pyruvic acid (Ser) modification is found at serine 25. Threonine 57 is a substrate binding site. The active-site Proton donor is tyrosine 58. 73-75 (GAA) is a binding site for substrate.

Belongs to the PanD family. In terms of assembly, heterooctamer of four alpha and four beta subunits. Requires pyruvate as cofactor. Post-translationally, is synthesized initially as an inactive proenzyme, which is activated by self-cleavage at a specific serine bond to produce a beta-subunit with a hydroxyl group at its C-terminus and an alpha-subunit with a pyruvoyl group at its N-terminus.

It is found in the cytoplasm. It carries out the reaction L-aspartate + H(+) = beta-alanine + CO2. The protein operates within cofactor biosynthesis; (R)-pantothenate biosynthesis; beta-alanine from L-aspartate: step 1/1. Its function is as follows. Catalyzes the pyruvoyl-dependent decarboxylation of aspartate to produce beta-alanine. This chain is Aspartate 1-decarboxylase, found in Alcanivorax borkumensis (strain ATCC 700651 / DSM 11573 / NCIMB 13689 / SK2).